A 169-amino-acid polypeptide reads, in one-letter code: Cytochrome c oxidase subunit 4 isoform 1, mitochondrial (169 aa).

The N-terminal 22 residues, 1–22, are a transit peptide targeting the mitochondrion; sequence MLATRVFSLVGKRAISTSVCVR. At 23 to 98 the chain is on the mitochondrial matrix side; the sequence is AHESVVKSED…SFAEMNRGSN (76 aa). Lysine 29 carries the N6-acetyllysine; alternate modification. Lysine 29 carries the N6-succinyllysine; alternate modification. At lysine 53 the chain carries N6-acetyllysine. Residues serine 56 and serine 58 each carry the phosphoserine modification. Lysine 60 is modified (N6-acetyllysine; alternate). Residue lysine 60 is modified to N6-succinyllysine; alternate. Residue lysine 67 is modified to N6-acetyllysine. Residues 99–124 form a helical membrane-spanning segment; it reads EWKTVVGGAMFFIGFTALVIMWQKHY. The Mitochondrial intermembrane portion of the chain corresponds to 125 to 169; that stretch reads VYGPLPQSFDKEWVAKQTKRMLDMKVNPIQGLASKWDYEKNEWKK.

Belongs to the cytochrome c oxidase IV family. Component of the cytochrome c oxidase (complex IV, CIV), a multisubunit enzyme composed of 14 subunits. The complex is composed of a catalytic core of 3 subunits MT-CO1, MT-CO2 and MT-CO3, encoded in the mitochondrial DNA, and 11 supernumerary subunits COX4I1 (or COX4I2), COX5A, COX5B, COX6A1 (or COX6A2), COX6B1 (or COX6B2), COX6C, COX7A2 (or COX7A1), COX7B, COX7C, COX8A and NDUFA4, which are encoded in the nuclear genome. The complex exists as a monomer or a dimer and forms supercomplexes (SCs) in the inner mitochondrial membrane with NADH-ubiquinone oxidoreductase (complex I, CI) and ubiquinol-cytochrome c oxidoreductase (cytochrome b-c1 complex, complex III, CIII), resulting in different assemblies (supercomplex SCI(1)III(2)IV(1) and megacomplex MCI(2)III(2)IV(2)). Interacts with AFG1L. Interacts with PHB2; the interaction decreases in absence of SPHK2. Interacts with ABCB7; this interaction allows the regulation of cellular iron homeostasis and cellular reactive oxygen species (ROS) levels in cardiomyocytes. Interacts with FLVCR2; this interaction occurs in the absence of heme and is disrupted upon heme binding. Interacts with IRGC. Ubiquitous.

It localises to the mitochondrion inner membrane. It participates in energy metabolism; oxidative phosphorylation. In terms of biological role, component of the cytochrome c oxidase, the last enzyme in the mitochondrial electron transport chain which drives oxidative phosphorylation. The respiratory chain contains 3 multisubunit complexes succinate dehydrogenase (complex II, CII), ubiquinol-cytochrome c oxidoreductase (cytochrome b-c1 complex, complex III, CIII) and cytochrome c oxidase (complex IV, CIV), that cooperate to transfer electrons derived from NADH and succinate to molecular oxygen, creating an electrochemical gradient over the inner membrane that drives transmembrane transport and the ATP synthase. Cytochrome c oxidase is the component of the respiratory chain that catalyzes the reduction of oxygen to water. Electrons originating from reduced cytochrome c in the intermembrane space (IMS) are transferred via the dinuclear copper A center (CU(A)) of subunit 2 and heme A of subunit 1 to the active site in subunit 1, a binuclear center (BNC) formed by heme A3 and copper B (CU(B)). The BNC reduces molecular oxygen to 2 water molecules using 4 electrons from cytochrome c in the IMS and 4 protons from the mitochondrial matrix. The chain is Cytochrome c oxidase subunit 4 isoform 1, mitochondrial from Homo sapiens (Human).